The primary structure comprises 539 residues: uncharacterized protein (539 aa).

The next 5 helical transmembrane spans lie at 4 to 22 (LVENQLLALVVIMTVGLLL), 27 to 46 (IFGFRLGVAAVLFVGLALST), 56 to 78 (LIYVVGLSLFVYTIGLEAGPGFF), 90 to 112 (ALTLGAIIATTALAWALITVLNI), and 155 to 177 (PVVAYSLAYPLGVLIVILSIAIF). RCK C-terminal domains lie at 187 to 269 (KEAE…AIGE) and 271 to 352 (IDGD…LLGD). Helical transmembrane passes span 360–382 (FNLLPLAAGLMIGVLVGMVEFPL), 422–444 (LALRQLGITLFLAAIGTSAGAGF), 453–475 (SLTIIGFGALLTLFISITVLFVG), and 516–538 (YTSVYPLAMIAKILAAQTLLFLL).

This sequence belongs to the AAE transporter (TC 2.A.81) family.

The protein localises to the cell membrane. This is an uncharacterized protein from Corynebacterium glutamicum (strain ATCC 13032 / DSM 20300 / JCM 1318 / BCRC 11384 / CCUG 27702 / LMG 3730 / NBRC 12168 / NCIMB 10025 / NRRL B-2784 / 534).